We begin with the raw amino-acid sequence, 172 residues long: Adenine phosphoribosyltransferase (172 aa).

The protein belongs to the purine/pyrimidine phosphoribosyltransferase family. As to quaternary structure, homodimer.

The protein resides in the cytoplasm. The enzyme catalyses AMP + diphosphate = 5-phospho-alpha-D-ribose 1-diphosphate + adenine. It functions in the pathway purine metabolism; AMP biosynthesis via salvage pathway; AMP from adenine: step 1/1. In terms of biological role, catalyzes a salvage reaction resulting in the formation of AMP, that is energically less costly than de novo synthesis. This Crocosphaera subtropica (strain ATCC 51142 / BH68) (Cyanothece sp. (strain ATCC 51142)) protein is Adenine phosphoribosyltransferase.